The following is a 185-amino-acid chain: Large ribosomal subunit protein uL5 (185 aa).

It belongs to the universal ribosomal protein uL5 family. As to quaternary structure, part of the 50S ribosomal subunit; part of the 5S rRNA/L5/L18/L25 subcomplex. Contacts the 5S rRNA and the P site tRNA. Forms a bridge to the 30S subunit in the 70S ribosome.

Functionally, this is one of the proteins that bind and probably mediate the attachment of the 5S RNA into the large ribosomal subunit, where it forms part of the central protuberance. In the 70S ribosome it contacts protein S13 of the 30S subunit (bridge B1b), connecting the 2 subunits; this bridge is implicated in subunit movement. Contacts the P site tRNA; the 5S rRNA and some of its associated proteins might help stabilize positioning of ribosome-bound tRNAs. In Treponema pallidum (strain Nichols), this protein is Large ribosomal subunit protein uL5.